Reading from the N-terminus, the 434-residue chain is D-amino acid dehydrogenase (434 aa).

FAD is bound at residue 3–17; sequence VVILGSGVVGVASAW.

This sequence belongs to the DadA oxidoreductase family. The cofactor is FAD.

The catalysed reaction is a D-alpha-amino acid + A + H2O = a 2-oxocarboxylate + AH2 + NH4(+). It participates in amino-acid degradation; D-alanine degradation; NH(3) and pyruvate from D-alanine: step 1/1. In terms of biological role, oxidative deamination of D-amino acids. The polypeptide is D-amino acid dehydrogenase (Yersinia enterocolitica serotype O:8 / biotype 1B (strain NCTC 13174 / 8081)).